Reading from the N-terminus, the 462-residue chain is L-seryl-tRNA(Sec) selenium transferase (462 aa).

Residue K293 is modified to N6-(pyridoxal phosphate)lysine.

It belongs to the SelA family. Requires pyridoxal 5'-phosphate as cofactor.

Its subcellular location is the cytoplasm. It catalyses the reaction L-seryl-tRNA(Sec) + selenophosphate + H(+) = L-selenocysteinyl-tRNA(Sec) + phosphate. The protein operates within aminoacyl-tRNA biosynthesis; selenocysteinyl-tRNA(Sec) biosynthesis; selenocysteinyl-tRNA(Sec) from L-seryl-tRNA(Sec) (bacterial route): step 1/1. In terms of biological role, converts seryl-tRNA(Sec) to selenocysteinyl-tRNA(Sec) required for selenoprotein biosynthesis. This is L-seryl-tRNA(Sec) selenium transferase from Clostridium botulinum (strain Okra / Type B1).